The following is a 65-amino-acid chain: UPF0434 protein RPD_0454 (65 aa).

This sequence belongs to the UPF0434 family.

In Rhodopseudomonas palustris (strain BisB5), this protein is UPF0434 protein RPD_0454.